Reading from the N-terminus, the 75-residue chain is uncharacterized protein (75 aa).

Residues 4–26 (PSLLFLGFSGVLAFGEVGWVGVY) traverse the membrane as a helical segment.

It localises to the membrane. This is an uncharacterized protein from Treponema pallidum (strain Nichols).